The primary structure comprises 59 residues: Large ribosomal subunit protein bL32 (59 aa).

The interval 1–59 (MAVQQNRKSRSRRGMRRSHDALSSAALSIDPTTGEKHRRHHVTPDGFYRGKKVVEVSQD) is disordered. The segment covering 7 to 16 (RKSRSRRGMR) has biased composition (basic residues).

Belongs to the bacterial ribosomal protein bL32 family.

The protein is Large ribosomal subunit protein bL32 of Hahella chejuensis (strain KCTC 2396).